Here is a 202-residue protein sequence, read N- to C-terminus: Syndecan-2 (202 aa).

The N-terminal stretch at 1–18 is a signal peptide; it reads MQRAWILLTLGLMACVSA. Topologically, residues 19–145 are extracellular; it reads ETRTELTSDK…HSDNLFKRTE (127 aa). 3 O-linked (Xyl...) (glycosaminoglycan) serine glycosylation sites follow: S41, S55, and S57. Disordered stretches follow at residues 41–63 and 88–118; these read SGVY…DEDI and ETMT…ISEA. The segment covering 91–103 has biased composition (polar residues); it reads TLKTQSITPAQTE. Over residues 104–117 the composition is skewed to acidic residues; sequence SPEETDKEEVDISE. S116 is subject to Phosphoserine. Residues 146–170 form a helical membrane-spanning segment; sequence VLAAVIAGGVIGFLFAIFLILLLVY. The Cytoplasmic segment spans residues 171–202; that stretch reads RMRKKDEGSYDLGERKPSSAAYQKAPTKEFYA. The tract at residues 179 to 202 is disordered; sequence SYDLGERKPSSAAYQKAPTKEFYA. S188 carries the phosphoserine modification.

Belongs to the syndecan proteoglycan family. Interacts (via cytoplasmic domain) with SARM1. Forms a complex with SDCBP and PDCD6IP. Post-translationally, O-glycosylated; contains both heparan sulfate and chondroitin sulfate. In terms of processing, phosphorylated on serine residues. Preferential expression in cells of mesenchymal origin.

The protein resides in the membrane. In terms of biological role, cell surface proteoglycan which regulates dendritic arbor morphogenesis. The protein is Syndecan-2 (Sdc2) of Mus musculus (Mouse).